We begin with the raw amino-acid sequence, 238 residues long: Ribosomal RNA small subunit methyltransferase G (238 aa).

Residues Gly-77, Phe-82, 128-129 (AE), and Arg-147 contribute to the S-adenosyl-L-methionine site. The interval 216–238 (RKERSTPKKYPRKPGTPNKQPLS) is disordered.

Belongs to the methyltransferase superfamily. RNA methyltransferase RsmG family.

The protein localises to the cytoplasm. Its function is as follows. Specifically methylates the N7 position of guanine in position 535 of 16S rRNA. The sequence is that of Ribosomal RNA small subunit methyltransferase G from Halalkalibacterium halodurans (strain ATCC BAA-125 / DSM 18197 / FERM 7344 / JCM 9153 / C-125) (Bacillus halodurans).